Consider the following 600-residue polypeptide: Zinc finger and BTB domain-containing protein 46 (600 aa).

A BTB domain is found at 31 to 99 (CDACVVVEGK…MYSAHLALTS (69 aa)). Positions 173 to 222 (RRTSPANSSGDSAIASCHEGGSSYGKEDQEPKADGPDDVSSQSLWPGDVG) are disordered. The span at 197–207 (GKEDQEPKADG) shows a compositional bias: basic and acidic residues. Residue lysine 229 forms a Glycyl lysine isopeptide (Lys-Gly) (interchain with G-Cter in SUMO2) linkage. A Phosphoserine modification is found at serine 234. Residues 235–278 (PSHYGGSELPSSKDTAIQNSLSEQGSGDGWQPTGRRKNRKNKET) are disordered. Residues 243-259 (LPSSKDTAIQNSLSEQG) show a composition bias toward polar residues. 2 consecutive C2H2-type zinc fingers follow at residues 418 to 436 (FKCP…LKRH) and 446 to 468 (YPCE…TLVH). Residues 513 to 600 (LDHGGGGEGS…EPDKDFAWIS (88 aa)) are disordered. Residues 533–555 (YLEDPDDPRGEAEEELVEDEDED) are compositionally biased toward acidic residues. Basic and acidic residues-rich tracts occupy residues 556-574 (VAKW…LLGD) and 591-600 (EPDKDFAWIS).

Sumoylated. Desumoylation by DESI1 reverses transcriptional repression activity.

The protein resides in the nucleus. Functions as a transcriptional repressor for PRDM1. The sequence is that of Zinc finger and BTB domain-containing protein 46 (Zbtb46) from Mus musculus (Mouse).